The chain runs to 347 residues: MLFDYINALLKKPTLRTPIWVMRQAGRYLPEYRETRIKAGDFLTLCKSPELACEVTMQPIDRFDLDAAILFSDILTIPDAMGLGLYFLEGEGPKFSNPLNTLSSIEQLKKPNVGNELSYVTDAVSVIKKALNNKVPLIGFTGSPWTLATYMVEGGSSKNFVKVKGLMYENPVYMHQLLDKLSDIIIDYLNGQIQVGVDSVMIFDTWGGLLNKQSYEDFSLQYMTKIVNGIKRKFNGKTIPITLFTKGGAMWLEQIANSGCDGVALDWTVELNDAQQRIGAKVALQGNLDPCVLYASPEKIREEVKKILSQFQGDTGHVFNLGHGISPDVNPEHMKVLVDVVHEFSKR.

Substrate-binding positions include 23-27, D73, Y150, T205, and H323; that span reads RQAGR.

This sequence belongs to the uroporphyrinogen decarboxylase family. As to quaternary structure, homodimer.

The protein resides in the cytoplasm. The enzyme catalyses uroporphyrinogen III + 4 H(+) = coproporphyrinogen III + 4 CO2. Its pathway is porphyrin-containing compound metabolism; protoporphyrin-IX biosynthesis; coproporphyrinogen-III from 5-aminolevulinate: step 4/4. Its function is as follows. Catalyzes the decarboxylation of four acetate groups of uroporphyrinogen-III to yield coproporphyrinogen-III. The sequence is that of Uroporphyrinogen decarboxylase from Ruthia magnifica subsp. Calyptogena magnifica.